Here is a 510-residue protein sequence, read N- to C-terminus: MRGAYYVLTALFVVTSSDIAAESDHPLHNFNHHVITAGNAVVKALPNRSLRGSRDGRNDLANEERSISSFLANMIDEGVAKLPLVAEIIKTKPLAAKAVKQKPRAMKKKFRAAKAVEEKSRPAKAAKKTPRAAKAAKKTPPQAKVVDEILYGVEATKEMGKSEEYGVLKAATEGADQALKKHWDPSRETAVIVAPSRDISGNVILSLRKWKVGFNGMRPMVVLDKHKDNIDRVHGAFGTLCDKNMQITPVETSYLWSMLDWNIEKNFKKKHKQTLVRLAQRYVLIGLRQVKKDRKVWNQWKKLPDPLKFGVLNYLLNLHYQRWVRMYNIFRRYRPDQNGVPSTLGGNANINRALALQKHSKVRSVFPYEPFDVAWASKGRRSVLSKRSRRTFDGNTDTASLPSKQLKTRSSESSMPPLIESTTSGDDSVPTKEIKSSFDDPKSAFAPFKPGDDFVHTENSRLSFGGLSSAFVPYRRPNVHNSQSLTSPITVSSMPSLMKSTTSGDGLRPY.

Residues 1–20 (MRGAYYVLTALFVVTSSDIA) form the signal peptide. The N-linked (GlcNAc...) asparagine glycan is linked to N47. The short motif at 48–65 (RSLRGSRDGRNDLANEER) is the RxLR-dEER element. Disordered stretches follow at residues 111-139 (RAAK…AKKT) and 386-442 (KRSR…DDPK). Residues 122 to 137 (PAKAAKKTPRAAKAAK) are compositionally biased toward basic residues. Over residues 393-405 (DGNTDTASLPSKQ) the composition is skewed to polar residues. The span at 429 to 442 (VPTKEIKSSFDDPK) shows a compositional bias: basic and acidic residues.

The protein belongs to the RxLR effector family.

It localises to the secreted. The protein localises to the host nucleus. Its function is as follows. Secreted effector that completely suppresses the host cell death induced by cell death-inducing proteins. The sequence is that of Secreted RxLR effector protein 108 from Plasmopara viticola (Downy mildew of grapevine).